Here is a 291-residue protein sequence, read N- to C-terminus: Prepilin leader peptidase/N-methyltransferase (291 aa).

A helical membrane pass occupies residues 14 to 34; sequence LYFSLVFLFSLMIGSFLNVVI. Positions 75, 78, 100, and 103 each coordinate Zn(2+). The next 6 membrane-spanning stretches (helical) occupy residues 107 to 127, 131 to 151, 162 to 182, 186 to 206, 232 to 252, and 262 to 282; these read ISAR…VVAM, PGWG…LTFI, LTLP…YVPL, VIGA…FKLL, LPIV…GLIL, and IPFG…GDSI.

This sequence belongs to the peptidase A24 family. Zn(2+) serves as cofactor.

The protein localises to the cell inner membrane. It catalyses the reaction Typically cleaves a -Gly-|-Phe- bond to release an N-terminal, basic peptide of 5-8 residues from type IV prepilin, and then N-methylates the new N-terminal amino group, the methyl donor being S-adenosyl-L-methionine.. Its function is as follows. Plays an essential role in type IV pili and type II pseudopili formation by proteolytically removing the leader sequence from substrate proteins and subsequently monomethylating the alpha-amino group of the newly exposed N-terminal phenylalanine. This Aeromonas salmonicida (strain A449) protein is Prepilin leader peptidase/N-methyltransferase (tapD).